A 772-amino-acid chain; its full sequence is Putative ribosomal protein S6 kinase alpha-2 (772 aa).

One can recognise a Protein kinase 1 domain in the interval 17–284 (FALLRVLGKG…VDEIKNHKFM (268 aa)). ATP is bound by residues 23 to 31 (LGKGAYGKV) and Lys49. The active-site Proton acceptor is the Asp145. Phosphoserine; by autocatalysis occurs at positions 180, 342, and 347. An AGC-kinase C-terminal domain is found at 285 to 353 (SSIDWDAAVK…VSPSVIFAND (69 aa)). Positions 382-653 (KSDAGLLGKG…MQELTAHMWL (272 aa)) constitute a Protein kinase 2 domain. ATP contacts are provided by residues 388–396 (LGKGAFSVV) and Lys411. Catalysis depends on Asp500, which acts as the Proton acceptor. Positions 706-772 (RGIKRQSGDK…IRETRGSDSS (67 aa)) are disordered. Ser712 bears the Phosphoserine; by autocatalysis mark. Composition is skewed to polar residues over residues 718-727 (SGNSKNSRVT) and 739-748 (EMTSSTSRPS).

It belongs to the protein kinase superfamily. AGC Ser/Thr protein kinase family. S6 kinase subfamily. The cofactor is Mg(2+).

It catalyses the reaction L-seryl-[protein] + ATP = O-phospho-L-seryl-[protein] + ADP + H(+). The catalysed reaction is L-threonyl-[protein] + ATP = O-phospho-L-threonyl-[protein] + ADP + H(+). Its activity is regulated as follows. Activated by multiple phosphorylations on threonine and serine residues. Serine/threonine kinase that may play a role in mediating the mitogen- and stress-induced effects on transcription. May repress transcription via phosphorylation of 'Ser-1' of histone H2A. May phosphorylate histone H3. In Caenorhabditis elegans, this protein is Putative ribosomal protein S6 kinase alpha-2 (rskn-2).